The chain runs to 530 residues: MARKALKLASWTSMALAASGIYFYSNKYLDPNDFGAVRVGRAVATTAVISYDYLTSLKSVPYGSEEYLQLRSKSWPVFLQVHLRSARRLCELCCANRGTFIKVGQHLGALDYLLPEEYTSTLKVLHSQAPQSSMQEIRQVIREDLGKEIHDLFQSFDDTPLGTASLAQVHKAVLHDGRTVAVKVQHPKVRAQSSKDILLMEVLVLAVKQLFPEFEFMWLVDEAKKNLPLELDFLNEGRNAEKVSQMLRHFDFLKVPRIHWDLSTERVLLMEFVDGGQVNDRDYMERNKIDVNEISRHLGKMYSEMIFVNGFVHCDPHPGNVLVRKHPGTGKAEIVLLDHGLYQMLTEEFRLNYCHLWQSLIWTDMKRVKEYSQRLGAGDLYPLFACMLTARSWDSVNRGISQAPVTATEDLEIRNNAANYLPQISHLLNHVPRQMLLILKTNDLLRGIEAALGTRASASSFLNMSRCCIRALAEHKKKNTCSFFRRTQISFSEAFNLWQINLHELILRVKGLKLADRVLALICWLFPAPL.

The region spanning 155 to 467 is the Protein kinase domain; sequence SFDDTPLGTA…ASSFLNMSRC (313 aa). ATP is bound by residues 161 to 169 and lysine 183; that span reads LGTASLAQV. The active-site Proton acceptor is the aspartate 315.

Belongs to the protein kinase superfamily. ADCK protein kinase family.

The protein localises to the mitochondrion. Appears to be essential for maintaining mitochondrial cristae formation and mitochondrial function by acting via YME1L1 in a kinase-independent manner to regulate essential mitochondrial structural proteins OPA1 and IMMT. The action of this enzyme is not yet clear. It is not known if it has protein kinase activity and what type of substrate it would phosphorylate (Ser, Thr or Tyr). The protein is AarF domain-containing protein kinase 1 of Homo sapiens (Human).